A 109-amino-acid chain; its full sequence is Small ribosomal subunit protein bS6 (109 aa).

The protein belongs to the bacterial ribosomal protein bS6 family.

Its function is as follows. Binds together with bS18 to 16S ribosomal RNA. The chain is Small ribosomal subunit protein bS6 from Dehalococcoides mccartyi (strain CBDB1).